The chain runs to 305 residues: Polyamine aminopropyltransferase 2 (305 aa).

The region spanning W7–D242 is the PABS domain. An S-methyl-5'-thioadenosine-binding site is contributed by Q36. Spermidine-binding residues include H67 and E91. S-methyl-5'-thioadenosine-binding positions include D111 and D143–G144. D161 serves as the catalytic Proton acceptor. P170 contacts S-methyl-5'-thioadenosine.

It belongs to the spermidine/spermine synthase family. Homodimer or homotetramer.

Its subcellular location is the cytoplasm. The enzyme catalyses S-adenosyl 3-(methylsulfanyl)propylamine + propane-1,3-diamine = norspermidine + S-methyl-5'-thioadenosine + H(+). Involved in the biosynthesis of polyamines which are thought to support the growth of thermophilic microorganisms under high-temperature conditions. It seems that long-chain and branched-chain of polyamines effectively stabilize DNA and RNA, respectively. Catalyzes the irreversible transfer of a propylamine group from the amino donor S-adenosylmethioninamine (decarboxy-AdoMet) to 1,3-diaminopropane to yield sym-norspermidine (bis(3-aminopropyl)amine). It can also synthesize thermospermine from spermidine with a very low activity. The sequence is that of Polyamine aminopropyltransferase 2 from Hyperthermus butylicus (strain DSM 5456 / JCM 9403 / PLM1-5).